Consider the following 211-residue polypeptide: Ras-related protein rab-11.1 (211 aa).

Gly-18–Asn-26 contacts GTP. Positions Ser-40–Phe-48 match the Effector region motif. Residues Asp-66–Gln-70, Asn-124–Asp-127, and Ser-154–Leu-156 each bind GTP. The disordered stretch occupies residues Gly-187–Pro-211. Residues Cys-208 and Cys-209 are each lipidated (S-geranylgeranyl cysteine).

It belongs to the small GTPase superfamily. Rab family. In terms of assembly, interacts with rei-1 and rei-2. The GDP-form preferentially binds to rei-1 and rei-2. In terms of tissue distribution, expressed weakly in sperm, but more predominantly in oocytes. Expressed in the intestine.

The protein resides in the cytoplasmic vesicle. The protein localises to the secretory vesicle. It is found in the endosome. Its subcellular location is the cytoplasm. It localises to the cytoskeleton. The protein resides in the spindle. The protein localises to the microtubule organizing center. It is found in the spindle pole body. Its subcellular location is the centrosome. It localises to the apical cell membrane. The protein resides in the cytosol. The protein localises to the recycling endosome membrane. It is found in the golgi apparatus membrane. Its subcellular location is the cytoplasmic granule. In terms of biological role, the small GTPases Rab are key regulators of intracellular membrane trafficking, from the formation of transport vesicles to their fusion with membranes. Rabs cycle between an inactive GDP-bound form and an active GTP-bound form that is able to recruit to membranes different set of downstream effectors directly responsible for vesicle formation, movement, tethering and fusion. Involved in regulating the meiotic maturation of oocytes. Plays a role in egg shell formation, regulating exocytosis of chondroitin proteoglycans following fertilization. Controls cortical granule localization and targets them to the plasma membrane for exocytosis. Acts as a major regulator of membrane delivery during cytokinesis. Regulates the cytoskeleton by facilitating astral microtubule elongation and organization during metaphase to ensure proper spindle alignment and polarity in the first embryonic cell division. Maintains normal endoplasmic reticulum morphology during metaphase. Involved in vesicle formation and plasma membrane repair following exposure to pore forming toxins. Regulates endocytic recycling. May play a role in yolk receptor endocytosis in growing oocytes. Plays a role in the shedding of pathogen spores from intestinal cells via its involvement in spore fusion and endocytic trafficking. The chain is Ras-related protein rab-11.1 from Caenorhabditis elegans.